The chain runs to 190 residues: Peptidyl-tRNA hydrolase (190 aa).

Tyr-14 is a binding site for tRNA. His-19 acts as the Proton acceptor in catalysis. TRNA contacts are provided by Tyr-64, Asn-66, and Asn-112.

The protein belongs to the PTH family. In terms of assembly, monomer.

The protein resides in the cytoplasm. It catalyses the reaction an N-acyl-L-alpha-aminoacyl-tRNA + H2O = an N-acyl-L-amino acid + a tRNA + H(+). Its function is as follows. Hydrolyzes ribosome-free peptidyl-tRNAs (with 1 or more amino acids incorporated), which drop off the ribosome during protein synthesis, or as a result of ribosome stalling. In terms of biological role, catalyzes the release of premature peptidyl moieties from peptidyl-tRNA molecules trapped in stalled 50S ribosomal subunits, and thus maintains levels of free tRNAs and 50S ribosomes. This chain is Peptidyl-tRNA hydrolase, found in Chlorobium phaeovibrioides (strain DSM 265 / 1930) (Prosthecochloris vibrioformis (strain DSM 265)).